We begin with the raw amino-acid sequence, 520 residues long: uncharacterized protein (520 aa).

Transmembrane regions (helical) follow at residues 38-58 (VVLI…IPGG), 84-104 (IAIY…GIFN), 105-125 (IGIS…ILKV), 138-158 (IITV…VATL), 167-187 (VVSA…LVET), 220-240 (FGWL…AVVL), 271-291 (FLSF…VYTA), 318-338 (IAIG…SVLI), and 355-375 (ASLV…MVYF).

The protein localises to the cell membrane. This is an uncharacterized protein from Mycoplasma genitalium (strain ATCC 33530 / DSM 19775 / NCTC 10195 / G37) (Mycoplasmoides genitalium).